A 212-amino-acid chain; its full sequence is Methylthioribulose-1-phosphate dehydratase (212 aa).

Zn(2+) contacts are provided by histidine 103 and histidine 105.

The protein belongs to the aldolase class II family. MtnB subfamily. It depends on Zn(2+) as a cofactor.

The catalysed reaction is 5-(methylsulfanyl)-D-ribulose 1-phosphate = 5-methylsulfanyl-2,3-dioxopentyl phosphate + H2O. The protein operates within amino-acid biosynthesis; L-methionine biosynthesis via salvage pathway; L-methionine from S-methyl-5-thio-alpha-D-ribose 1-phosphate: step 2/6. Catalyzes the dehydration of methylthioribulose-1-phosphate (MTRu-1-P) into 2,3-diketo-5-methylthiopentyl-1-phosphate (DK-MTP-1-P). This chain is Methylthioribulose-1-phosphate dehydratase, found in Sorangium cellulosum (strain So ce56) (Polyangium cellulosum (strain So ce56)).